The following is a 651-amino-acid chain: Protein numb homolog (651 aa).

One can recognise a PID domain in the interval 33 to 193 (RTGKCSFPVK…ASRTTFTREG (161 aa)). At Thr102 the chain carries Phosphothreonine; by AAK1. Phosphoserine is present on Ser194. Residues 228–255 (SSVAPGNTAPSPSSPTSPTSDATTSLEM) are disordered. Positions 235–252 (TAPSPSSPTSPTSDATTS) are enriched in low complexity. Thr243 carries the phosphothreonine modification. At Ser244 the chain carries Phosphoserine. Phosphoserine; by CaMK1 occurs at positions 276 and 295. Disordered stretches follow at residues 419 to 483 (QSSG…SPFQ) and 623 to 651 (LENK…EIEL). The residue at position 425 (Ser425) is a Phosphoserine. Position 436 is a phosphothreonine (Thr436). Over residues 436–449 (TPSEADRWLEEVSK) the composition is skewed to basic and acidic residues. Ser438 is subject to Phosphoserine. Positions 453-466 (AQQPQASAAPLQPV) are enriched in low complexity. The segment covering 630 to 644 (RTNPSPTNPFSSDLQ) has biased composition (polar residues). Phosphoserine is present on Ser634.

In terms of assembly, interacts with SIAH1. Interacts with LNX. Interacts with CDH1. Interacts with TFAP2A and TFAP2B. Interacts with RALBP1 in a complex also containing EPN1 and TFAP2A during interphase and mitosis. Interacts with AAK1. May interact with DUOXA1. In terms of processing, phosphorylated on Ser-276 and Ser-295 by CaMK1. Post-translationally, isoform 1 and isoform 2 are ubiquitinated by LNX leading to their subsequent proteasomal degradation. Ubiquitinated; mediated by SIAH1 and leading to its subsequent proteasomal degradation.

It is found in the cell membrane. It localises to the endosome membrane. Functionally, regulates clathrin-mediated receptor endocytosis. Plays a role in the process of neurogenesis. Required throughout embryonic neurogenesis to maintain neural progenitor cells, also called radial glial cells (RGCs), by allowing their daughter cells to choose progenitor over neuronal cell fate. Not required for the proliferation of neural progenitor cells before the onset of neurogenesis. Also involved postnatally in the subventricular zone (SVZ) neurogenesis by regulating SVZ neuroblasts survival and ependymal wall integrity. May also mediate local repair of brain ventricular wall damage. The protein is Protein numb homolog of Homo sapiens (Human).